The following is a 299-amino-acid chain: Recombination-associated protein RdgC (299 aa).

The protein belongs to the RdgC family.

It localises to the cytoplasm. Its subcellular location is the nucleoid. Its function is as follows. May be involved in recombination. This Bordetella parapertussis (strain 12822 / ATCC BAA-587 / NCTC 13253) protein is Recombination-associated protein RdgC.